Reading from the N-terminus, the 128-residue chain is Large ribosomal subunit protein eL22 (128 aa).

Residue threonine 62 is modified to Phosphothreonine. Serine 66 is modified (phosphoserine). Lysine 69 is modified (N6-succinyllysine).

It belongs to the eukaryotic ribosomal protein eL22 family. In terms of assembly, component of the large ribosomal subunit.

The protein localises to the cytoplasm. Its function is as follows. Component of the large ribosomal subunit. The ribosome is a large ribonucleoprotein complex responsible for the synthesis of proteins in the cell. This chain is Large ribosomal subunit protein eL22 (Rpl22), found in Rattus norvegicus (Rat).